The following is a 230-amino-acid chain: Large ribosomal subunit protein uL1 (230 aa).

Belongs to the universal ribosomal protein uL1 family. Part of the 50S ribosomal subunit.

Functionally, binds directly to 23S rRNA. The L1 stalk is quite mobile in the ribosome, and is involved in E site tRNA release. In terms of biological role, protein L1 is also a translational repressor protein, it controls the translation of the L11 operon by binding to its mRNA. In Leptospira interrogans serogroup Icterohaemorrhagiae serovar copenhageni (strain Fiocruz L1-130), this protein is Large ribosomal subunit protein uL1.